Here is a 269-residue protein sequence, read N- to C-terminus: MGALPVAHSLALTAAFLPCRRPAAHGRCRRRRYRAVVAYMEPNPNSPAAIAGRLVGALPIVGLVARILNDEGGVGGDIIDFAEFRRRVSKKCTVMDSKAFYDFNQRRGKPGDPFYVLLCCWLAAIGAGLLKTEEILEGVARLRISNDIEFEEETFIDMMRAAKEKRAKLKAPAPQIPMETRAEKALEAIYVCCFGQDMVEDEDEKLLRAILNAVFPSVGRAAVERMVASMAKQVASGERKRDGRTVSKEVQQRQLKDLEFLKQNKLESS.

The N-terminal 37 residues, 1-37 (MGALPVAHSLALTAAFLPCRRPAAHGRCRRRRYRAVV), are a transit peptide targeting the chloroplast.

The protein localises to the plastid. The protein resides in the chloroplast thylakoid membrane. Functionally, nuclear genome-encoded factor required for the accumulation of photosystem I (PSI). Functions as a PSI biogenesis factor. Cooperates with PYG7 to promote the stable assembly of PSI in the thylakoid membrane. May target primarily the PsaC subunit. Does not seem to be required for the expression of chloroplast genes encoding PSI subunits. The protein is Photosystem I assembly factor PSA3, chloroplastic of Zea mays (Maize).